The following is a 313-amino-acid chain: MKLERLLAMVVLLISKKQVQAAELAELFEVSVRTIYRDIETINRAGIPIVTSQGSGGGIGIMETYRLEREWLKEEELFAIASALQSVSSMYEPVSHSTAYQKIKHLIPEQSTQAFKHQTEKWFIDMTAWGHTEDQKTLREKISAAIDRLLTISFTYTSASGETLLRETEPYTLVCKAGHWYLYAYCLVRNDFRFFKLNRMKDLAILHQTFIRKDIQLDTLPWDKSWYQKDRLTELVILVQPSARQRIGEWFGYDVLHCCEEDEICQAVISLPEDQWLIGFLLQFGKDIEVLQPLHIRDKVKETIHHMQKIYET.

One can recognise an HTH deoR-type domain in the interval 2–57 (KLERLLAMVVLLISKKQVQAAELAELFEVSVRTIYRDIETINRAGIPIVTSQGSGG). Residues 19–38 (VQAAELAELFEVSVRTIYRD) constitute a DNA-binding region (H-T-H motif). The region spanning 131–210 (HTEDQKTLRE…KDLAILHQTF (80 aa)) is the WYL domain.

It is found in the cytoplasm. This is an uncharacterized protein from Bacillus subtilis (strain 168).